A 296-amino-acid polypeptide reads, in one-letter code: UDP-N-acetylglucosamine transporter TMEM241 homolog (296 aa).

The next 10 helical transmembrane spans lie at 7–29, 41–61, 67–87, 93–113, 126–146, 147–167, 187–207, 217–237, 248–266, and 272–291; these read AVGL…VLSV, WQTL…WLEI, SDVV…YAGS, LPIP…YGFQ, IFSI…DPQF, DADG…YKVF, VFSV…ISAL, FHSG…ASVK, ASWN…LIYF, and VPLT…LVYA.

This sequence belongs to the nucleotide-sugar transporter family. SLC35A subfamily.

It localises to the golgi apparatus. The protein localises to the cis-Golgi network membrane. In terms of biological role, golgi-localized UDP-N-acetylglucosamine (UDP-GlcNAc) transporter that transports UDP-N-acetylglucosamine into Golgi lumen. The chain is UDP-N-acetylglucosamine transporter TMEM241 homolog (tmem241) from Xenopus laevis (African clawed frog).